Reading from the N-terminus, the 968-residue chain is Serine/threonine-protein kinase 10 (968 aa).

Ser13 and Ser20 each carry phosphoserine. The 259-residue stretch at 36 to 294 (WEIVGELGDG…AAQLLEHPFV (259 aa)) folds into the Protein kinase domain. ATP-binding positions include 42 to 50 (LGDGAFGKV) and Lys65. The active-site Proton acceptor is Asp157. The tract at residues 175-224 (DFGVSAKNLKTLQKRDSFIGTPYWMAPEVVMCETMKDTPYDYKADIWSLG) is activation segment. Ser191 carries the post-translational modification Phosphoserine. 2 stretches are compositionally biased toward polar residues: residues 337-351 (LENH…SPPS) and 361-393 (SPST…TTSP). Disordered stretches follow at residues 337–411 (LENH…VPLR) and 425–490 (AQEK…CSSL). Residues Ser438, Ser450, Ser454, Ser485, Ser514, and Ser549 each carry the phosphoserine modification. Residues 441–457 (ANRSQKASQSRPNSSAL) show a composition bias toward polar residues. A coiled-coil region spans residues 573–947 (QKEEHRNQTQ…FFKLSEEAEC (375 aa)). Disordered regions lie at residues 668–690 (VEKL…HTQK), 827–865 (INGG…HENQ), 910–929 (LKEW…EDLN), and 944–968 (EAEC…ADAS). Basic and acidic residues predominate over residues 835 to 865 (EQREKIKQFSQQEEKRQKSERLQQQQKHENQ). Thr952 carries the post-translational modification Phosphothreonine.

Belongs to the protein kinase superfamily. STE Ser/Thr protein kinase family. STE20 subfamily. Homodimer; homodimerization is required for activation segment autophosphorylation. In terms of processing, autophosphorylates following homodimerization, leading to activation of the protein. As to expression, highly expressed in rapidly proliferating tissues (spleen, placenta, and peripheral blood leukocytes). Also expressed in brain, heart, skeletal muscle, colon, thymus, kidney, liver, small intestine and lung.

The protein localises to the cell membrane. It catalyses the reaction L-seryl-[protein] + ATP = O-phospho-L-seryl-[protein] + ADP + H(+). It carries out the reaction L-threonyl-[protein] + ATP = O-phospho-L-threonyl-[protein] + ADP + H(+). With respect to regulation, inhibited by the pyrrole-indolinone inhibitor SU11274 (K00593): intercalates between the ATP-binding Lys-65 and alpha-C glutamate (Glu-81), resulting in a partial disordering of the lysine side chain. Also specifically inhibited by erlotinib. Slightly inhibited by gefitinib. Functionally, serine/threonine-protein kinase involved in regulation of lymphocyte migration. Phosphorylates MSN, and possibly PLK1. Involved in regulation of lymphocyte migration by mediating phosphorylation of ERM proteins such as MSN. Acts as a negative regulator of MAP3K1/MEKK1. May also act as a cell cycle regulator by acting as a polo kinase kinase: mediates phosphorylation of PLK1 in vitro; however such data require additional evidences in vivo. This Homo sapiens (Human) protein is Serine/threonine-protein kinase 10 (STK10).